Here is a 114-residue protein sequence, read N- to C-terminus: Hemerythrin subunit 2 (114 aa).

Residues His-26, His-55, Glu-59, His-74, His-78, His-102, and Asp-107 each coordinate Fe cation.

It belongs to the hemerythrin family.

Hemerythrin is a respiratory protein in blood cells of certain marine worms. The oxygen-binding site in each chain contains two iron atoms. This is Hemerythrin subunit 2 from Golfingia vulgaris (Marine worm).